The sequence spans 1321 residues: Adhesion G protein-coupled receptor A3 (1321 aa).

Positions 1-33 (MEPPGRRRGRAQPPLLLPLSLLALLALLGGGGG) are cleaved as a signal peptide. The Extracellular portion of the chain corresponds to 34–761 (GGAAALPAGC…YTQAASLLHP (728 aa)). N-linked (GlcNAc...) asparagine glycosylation is found at N81 and N98. LRR repeat units lie at residues 82-103 (RTVT…SFSG), 106-127 (LLER…AFWG), 130-151 (SLKR…IFRG), and 154-175 (NLVR…TFDY). 7 N-linked (GlcNAc...) asparagine glycosylation sites follow: N159, N206, N301, N332, N433, N453, and N592. The region spanning 187–237 (EYLLCDCNILWMHRWVKEKNITVRDTRCVYPKSLQAQPVTGVKQELLTCDP) is the LRRCT domain. The 99-residue stretch at 242–340 (PSFYMTPSHR…GNNTRTVDIV (99 aa)) folds into the Ig-like domain. An intrachain disulfide couples C264 to C324. Residues 583–750 (LDKQLSFKCN…AVLMDLTGSE (168 aa)) enclose the GAIN-B domain. One copy of the LRR 5 repeat lies at 594–620 (SNTFSSLALKNTIVEASIQLPPSLFSP). N-linked (GlcNAc...) asparagine glycans are attached at residues N652, N687, and N728. A GPS region spans residues 701 to 750 (AARWDFDLLNGQGGWKSDGCHILYSDENITTIQCYSLSNYAVLMDLTGSE). A disulfide bond links C720 and C734. Residues 762–782 (VVYTTAIILLLCLLAVIVSYI) traverse the membrane as a helical segment. At 783–796 (YHHSLIRISLKSWH) the chain is on the cytoplasmic side. The helical transmembrane segment at 797–817 (MLVNLCFHIFLTCVVFVGGIT) threads the bilayer. Residues 818–826 (QTRNASICQ) lie on the Extracellular side of the membrane. A glycan (N-linked (GlcNAc...) asparagine) is linked at N821. Residues 827–847 (AVGIILHYSTLATVLWVGVTA) traverse the membrane as a helical segment. Over 848–876 (RNIYKQVTKKAKRCQDPDEPPPPPRPMLR) the chain is Cytoplasmic. A helical transmembrane segment spans residues 877-897 (FYLIGGGIPIIVCGITAAANI). Over 898–919 (KNYGSRPNAPYCWMAWEPSLGA) the chain is Extracellular. A helical membrane pass occupies residues 920–940 (FYGPASFITFVNCMYFLSIFI). The Cytoplasmic portion of the chain corresponds to 941 to 996 (QLKRHPERKYELKEPTEEQQRLAANENGEINHQDSMSLSLISTSALENEHTFHSQL). Residues 997 to 1017 (LGASLTLLLYVALWMFGALAV) traverse the membrane as a helical segment. The Extracellular segment spans residues 1018 to 1024 (SLYYPLD). A helical transmembrane segment spans residues 1025–1045 (LVFSFVFGATSLSFSAFFVVH). The Cytoplasmic segment spans residues 1046–1321 (HCVNREDVRL…TGLWKHETTV (276 aa)). Positions 1073-1083 (NVQPPNSNGTN) are enriched in polar residues. Disordered stretches follow at residues 1073 to 1094 (NVQP…NSSA), 1198 to 1219 (VEGS…GHSR), 1231 to 1265 (QYNP…KKDA), and 1294 to 1321 (SNGQ…ETTV). Residues 1233–1250 (NPPQQDSSDACSTLPKSS) are compositionally biased toward polar residues. The PDZ-binding motif lies at 1319–1321 (TTV).

The protein belongs to the G-protein coupled receptor 2 family. Adhesion G-protein coupled receptor (ADGR) subfamily. In terms of assembly, interacts (via PDZ-binding motif) with DLG1.

It is found in the membrane. Functionally, orphan receptor that may have a role in planar cell polarity pathway. This Homo sapiens (Human) protein is Adhesion G protein-coupled receptor A3.